The sequence spans 99 residues: DNA-directed RNA polymerase subunit omega (99 aa).

This sequence belongs to the RNA polymerase subunit omega family. The RNAP catalytic core consists of 2 alpha, 1 beta, 1 beta' and 1 omega subunit. When a sigma factor is associated with the core the holoenzyme is formed, which can initiate transcription.

It catalyses the reaction RNA(n) + a ribonucleoside 5'-triphosphate = RNA(n+1) + diphosphate. Functionally, promotes RNA polymerase assembly. Latches the N- and C-terminal regions of the beta' subunit thereby facilitating its interaction with the beta and alpha subunits. The chain is DNA-directed RNA polymerase subunit omega from Xanthomonas oryzae pv. oryzae (strain MAFF 311018).